A 530-amino-acid chain; its full sequence is Type 2 DNA topoisomerase 6 subunit B (530 aa).

Residues Asn42, Asp76, 97–98 (SK), 106–113 (GMYGLGVK), and Lys427 contribute to the ATP site.

This sequence belongs to the TOP6B family. As to quaternary structure, homodimer. Heterotetramer of two Top6A and two Top6B chains.

It carries out the reaction ATP-dependent breakage, passage and rejoining of double-stranded DNA.. Its function is as follows. Relaxes both positive and negative superturns and exhibits a strong decatenase activity. This Saccharolobus islandicus (strain Y.N.15.51 / Yellowstone #2) (Sulfolobus islandicus) protein is Type 2 DNA topoisomerase 6 subunit B.